Reading from the N-terminus, the 61-residue chain is Small ribosomal subunit protein uS14 (61 aa).

Zn(2+)-binding residues include cysteine 24, cysteine 27, cysteine 40, and cysteine 43.

This sequence belongs to the universal ribosomal protein uS14 family. Zinc-binding uS14 subfamily. In terms of assembly, part of the 30S ribosomal subunit. Contacts proteins S3 and S10. The cofactor is Zn(2+).

Functionally, binds 16S rRNA, required for the assembly of 30S particles and may also be responsible for determining the conformation of the 16S rRNA at the A site. The sequence is that of Small ribosomal subunit protein uS14 from Desulfitobacterium hafniense (strain Y51).